The following is a 129-amino-acid chain: Iron-sulfur cluster assembly 1 homolog, mitochondrial (129 aa).

Residues 1–12 (MSASLVRATVRA) constitute a mitochondrion transit peptide. Fe cation is bound by residues cysteine 57, cysteine 121, and cysteine 123.

It belongs to the HesB/IscA family. Interacts with CRY2, but not with CRY1 (in vitro).

It localises to the mitochondrion. Functionally, involved in the maturation of mitochondrial 4Fe-4S proteins functioning late in the iron-sulfur cluster assembly pathway. Probably involved in the binding of an intermediate of Fe/S cluster assembly. In Mus musculus (Mouse), this protein is Iron-sulfur cluster assembly 1 homolog, mitochondrial (Isca1).